The sequence spans 619 residues: CREB-regulated transcription coactivator 3 (619 aa).

Phosphoserine is present on residues serine 4 and serine 62. The interval 129–148 (SQHLDESWPRQQPPWKEEKH) is disordered. Residue threonine 160 is modified to Phosphothreonine. Serine 162 is subject to Phosphoserine; by SIK2. Residue lysine 232 forms a Glycyl lysine isopeptide (Lys-Gly) (interchain with G-Cter in SUMO2) linkage. A phosphoserine mark is found at serine 273, serine 329, serine 332, serine 370, serine 391, serine 396, and serine 410. Residues 375–478 (STTNLSGPSR…TQQPQAAPSL (104 aa)) are disordered. The tract at residues 380–401 (SGPSRRRQPPVSPLTLSPGPEA) is required for interaction with PPP2CA and PPP2R1A. Polar residues-rich tracts occupy residues 405 to 415 (FSRQLSATSPL) and 422 to 431 (QMVTSEQSPL). A Phosphoserine modification is found at serine 443. The span at 443–454 (SPPPPYPTPQEL) shows a compositional bias: pro residues. Residues 455–478 (PQPLLQQPHAQEPPTQQPQAAPSL) show a composition bias toward low complexity.

The protein belongs to the TORC family. In terms of assembly, binding, as a tetramer, through its N-terminal region, with the bZIP domain of CREB1 enhances recruitment of TAF4 to the promoter. 'Arg-314' in the bZIP domain of CREB1 is essential for this interaction. Interacts (when phosphorylated at Ser-162 and Se-273) with 14-3-3 proteins. Interacts with YWHAE. Interacts (when phosphorylated at Ser-391) with phosphatase PP2A catalytic subunit PPP2CA and regulatory subunits PPP2R1A and PPP2R2A. In terms of processing, phosphorylation/dephosphorylation states of Ser-273 are required for regulating transduction of CREB activity. CRTCs/TORCs are inactive when phosphorylated, and active when dephosphorylated at this site. May be phosphorylated at Ser-391 by MAPK3/ERK1 and/or MAPK1/ERK2 or by some cyclin-dependent kinases such as CDK1,CDK2 or CDK5. Following adenylyl cyclase activation, dephosphorylated at Ser-162 and Ser-273 resulting in its dissociation from 14-3-3 proteins probably promoting CRTC3 translocation into the nucleus. Expressed in brown adipose tissues.

It localises to the nucleus. It is found in the cytoplasm. In terms of biological role, transcriptional coactivator for CREB1 which activates transcription through both consensus and variant cAMP response element (CRE) sites. Acts as a coactivator, in the SIK/TORC signaling pathway, being active when dephosphorylated. Acts independently of CREB1 'Ser-133' phosphorylation. Enhances the interaction of CREB1 with TAF4. Regulates the expression of specific CREB-activated genes such as the steroidogenic gene, StAR. Potent coactivator of PPARGC1A and inducer of mitochondrial biogenesis in muscle cells. This is CREB-regulated transcription coactivator 3 (Crtc3) from Mus musculus (Mouse).